We begin with the raw amino-acid sequence, 1608 residues long: Adenylate cyclase type 10 (1608 aa).

Guanylate cyclase domains are found at residues V42–Q179 and T293–M418. Mg(2+) is bound by residues D47 and I48. D47–T52 lines the ATP pocket. K95 contributes to the hydrogencarbonate binding site. D99 is a binding site for Mg(2+). ATP is bound by residues D99 and K144. The hydrogencarbonate site is built by V167, R176, and M337. ATP contacts are provided by residues V406 and N412–R416.

It belongs to the adenylyl cyclase class-4/guanylyl cyclase family. The cofactor is Mg(2+). Mn(2+) serves as cofactor. Post-translationally, cleavage may occur to generate the active 48 kDa form. As to expression, detected in testis (at protein level). Preferentially expressed in testis.

The protein localises to the cell membrane. It is found in the cytoplasm. The protein resides in the cytoskeleton. Its subcellular location is the perinuclear region. It localises to the nucleus. The protein localises to the cell projection. It is found in the cilium. The protein resides in the mitochondrion. It catalyses the reaction ATP = 3',5'-cyclic AMP + diphosphate. Its activity is regulated as follows. Activated by manganese or magnesium ions. In the presence of magnesium ions, the enzyme is activated by bicarbonate. Calcium mildly increases the enzyme activity, also in the presence of magnesium ions. Its function is as follows. Catalyzes the formation of the signaling molecule cAMP. May function as sensor that mediates responses to changes in cellular bicarbonate and CO(2) levels. Has a critical role in mammalian spermatogenesis by producing the cAMP which regulates cAMP-responsive nuclear factors indispensable for sperm maturation in the epididymis. Induces capacitation, the maturational process that sperm undergo prior to fertilization. Involved in ciliary beat regulation. This chain is Adenylate cyclase type 10 (Adcy10), found in Rattus norvegicus (Rat).